Reading from the N-terminus, the 647-residue chain is Neuronal PAS domain-containing protein 4-like (647 aa).

A basic motif; degenerate region spans residues K16–R29. Positions K16–S67 constitute a bHLH domain. The segment at D30 to S67 is helix-loop-helix motif. PAS domains follow at residues V117–G181 and S238–D274.

As to quaternary structure, heterodimer; efficient DNA binding requires dimerization with another bHLH protein. Specifically expressed in endothelial and hematopoietic precursor cells.

Its subcellular location is the nucleus. Functionally, transcription factor specifically expressed in endothelial and hematopoietic precursor cells that acts as a key regulator of the endothelial differentiation cascade. Acts as an early-response transcription factor that regulates the expression of early regulators of endothelial and haematopoietic differentiation, such as etv2 and tal1. The chain is Neuronal PAS domain-containing protein 4-like from Danio rerio (Zebrafish).